The chain runs to 232 residues: uncharacterized protein (232 aa).

The interval 119–145 (DEEYRENSKAPEAKARPSFVGEGRRLG) is disordered. Basic and acidic residues predominate over residues 123–133 (RENSKAPEAKA).

This is an uncharacterized protein from Encephalitozoon cuniculi (strain GB-M1) (Microsporidian parasite).